Reading from the N-terminus, the 562-residue chain is Zinc finger protein 579 (562 aa).

Residues 1 to 11 are compositionally biased toward pro residues; it reads MDPQPPPPAQG. Positions 1-45 are disordered; that stretch reads MDPQPPPPAQGSPPHRDRGRGRGRGRGRGRGRGRGRGGAGAPRAP. The span at 17 to 35 shows a compositional bias: basic residues; that stretch reads DRGRGRGRGRGRGRGRGRG. C2H2-type zinc fingers lie at residues 46–68, 74–96, and 102–125; these read LPCP…RLSH, HACP…LRGH, and LRCA…AQEH. At arginine 94 the chain carries Omega-N-methylarginine. Disordered regions lie at residues 120-154 and 166-199; these read HLAQ…EGVE and EEAT…AEAG. A compositionally biased stretch (basic and acidic residues) spans 187-197; that stretch reads DPRESEAKEAE. Phosphoserine is present on serine 191. 2 C2H2-type zinc fingers span residues 267 to 289 and 295 to 317; these read HQCS…RLVH and FVCP…RRVH. The segment at 321-377 is disordered; the sequence is SLLAPLPGAGKKDDKASGGRNSGKGPEGGEGAECGGASEGGEGGHNGGDATPARPPA. A compositionally biased stretch (gly residues) spans 340–367; it reads RNSGKGPEGGEGAECGGASEGGEGGHNG. 3 consecutive C2H2-type zinc fingers follow at residues 382-404, 410-432, and 439-461; these read FWCP…GVTH, FQCV…AQVH, and HPCP…QRCH. Position 486 is a phosphoserine (serine 486). The disordered stretch occupies residues 505–530; that stretch reads AHIKEEPPSPGTPPQSPPAPPVFLSA. Pro residues predominate over residues 512-525; that stretch reads PSPGTPPQSPPAPP.

It belongs to the krueppel C2H2-type zinc-finger protein family.

Its subcellular location is the nucleus. Its function is as follows. May be involved in transcriptional regulation. In Mus musculus (Mouse), this protein is Zinc finger protein 579 (Znf579).